Reading from the N-terminus, the 523-residue chain is Ubiquilin (523 aa).

The region spanning 2 to 77 is the Ubiquitin-like domain; sequence VKINIKSSTD…VHLVKGAAPP (76 aa). The interval 70 to 99 is disordered; sequence LVKGAAPPPPPPVEQQVPTPSNTQPQGIPG. STI1 domains are found at residues 100–135 and 139–178; these read VPQN…FRDM and NPEM…MREM. Positions 215-227 are enriched in low complexity; that stretch reads NQQAASQNQTNSN. The segment at 215-325 is disordered; the sequence is NQQAASQNQT…ASMFGGGGGG (111 aa). Polar residues predominate over residues 228–241; the sequence is PIQTNTDANPNSQP. A compositionally biased stretch (low complexity) spans 245-278; sequence PWSTNSSSTSSNPTSSSPSSRPTTGSSTNTGASN. A compositionally biased stretch (gly residues) spans 285–296; that stretch reads SGGGGGMGGGTN. The segment covering 297 to 310 has biased composition (low complexity); that stretch reads NTGTNNTGSTNNTG. 2 consecutive STI1 domains span residues 339–380 and 383–415; these read DPER…RQMM and NPQL…QQAM. The UBA domain maps to 480 to 523; the sequence is PPEQRFRLQLEQLEELGFVDRAANISALTSTNGNINLAIDRLLR.

Stable protein which acts as an antagonist of nosA by repressing cellular differentiation after the tight-aggregate stage, when cells differentiate into two precursor cell types, prespore and prestalk cells, prior to the formation of fruiting bodies. The protein is Ubiquilin (ubqln) of Dictyostelium discoideum (Social amoeba).